The chain runs to 114 residues: Nucleoid-associated protein Cyan7425_0899 (114 aa).

This sequence belongs to the YbaB/EbfC family. As to quaternary structure, homodimer.

It localises to the cytoplasm. Its subcellular location is the nucleoid. Its function is as follows. Binds to DNA and alters its conformation. May be involved in regulation of gene expression, nucleoid organization and DNA protection. This Cyanothece sp. (strain PCC 7425 / ATCC 29141) protein is Nucleoid-associated protein Cyan7425_0899.